The following is a 491-amino-acid chain: Probable Xaa-Pro aminopeptidase AFLA_084750 (491 aa).

4 residues coordinate Mn(2+): Asp271, Asp282, Glu419, and Glu458.

It belongs to the peptidase M24B family. Mn(2+) is required as a cofactor.

The enzyme catalyses Release of any N-terminal amino acid, including proline, that is linked to proline, even from a dipeptide or tripeptide.. Catalyzes the removal of a penultimate prolyl residue from the N-termini of peptides. In Aspergillus flavus (strain ATCC 200026 / FGSC A1120 / IAM 13836 / NRRL 3357 / JCM 12722 / SRRC 167), this protein is Probable Xaa-Pro aminopeptidase AFLA_084750.